Reading from the N-terminus, the 658-residue chain is Structure-specific endonuclease subunit SLX1 (658 aa).

The 81-residue stretch at 12 to 92 (PFYACYFLRS…AKPHLSRHLK (81 aa)) folds into the GIY-YIG domain. Disordered regions lie at residues 29 to 52 (YIGS…QGAY), 239 to 269 (GVAE…ETLP), 288 to 328 (PIPQ…NGVD), and 594 to 658 (TTSR…IDLT). Basic and acidic residues-rich tracts occupy residues 308-324 (KLSD…HDAE) and 627-640 (SKID…DTKK). A compositionally biased stretch (polar residues) spans 641–652 (NTTQKAKSNETS).

It belongs to the SLX1 family. Forms a heterodimer with SLX4. A divalent metal cation is required as a cofactor.

It is found in the nucleus. Its function is as follows. Catalytic subunit of the SLX1-SLX4 structure-specific endonuclease that resolves DNA secondary structures generated during DNA repair and recombination. Has endonuclease activity towards branched DNA substrates, introducing single-strand cuts in duplex DNA close to junctions with ss-DNA. This Mycosarcoma maydis (Corn smut fungus) protein is Structure-specific endonuclease subunit SLX1.